The sequence spans 56 residues: Large ribosomal subunit protein bL32 (56 aa).

Positions 1–28 (MAVQQNRKTRSKRGMRRSHDALTTAALS) are disordered. The span at 7–16 (RKTRSKRGMR) shows a compositional bias: basic residues.

This sequence belongs to the bacterial ribosomal protein bL32 family.

The sequence is that of Large ribosomal subunit protein bL32 from Vibrio vulnificus (strain CMCP6).